Reading from the N-terminus, the 166-residue chain is NAD(P)H-quinone oxidoreductase subunit I, chloroplastic (166 aa).

2 4Fe-4S ferredoxin-type domains span residues 55–84 and 95–124; these read GRIH…VDWK and LNYS…MTEE. Positions 64, 67, 70, 74, 104, 107, 110, and 114 each coordinate [4Fe-4S] cluster.

This sequence belongs to the complex I 23 kDa subunit family. As to quaternary structure, NDH is composed of at least 16 different subunits, 5 of which are encoded in the nucleus. [4Fe-4S] cluster serves as cofactor.

It localises to the plastid. The protein resides in the chloroplast thylakoid membrane. It carries out the reaction a plastoquinone + NADH + (n+1) H(+)(in) = a plastoquinol + NAD(+) + n H(+)(out). The catalysed reaction is a plastoquinone + NADPH + (n+1) H(+)(in) = a plastoquinol + NADP(+) + n H(+)(out). Its function is as follows. NDH shuttles electrons from NAD(P)H:plastoquinone, via FMN and iron-sulfur (Fe-S) centers, to quinones in the photosynthetic chain and possibly in a chloroplast respiratory chain. The immediate electron acceptor for the enzyme in this species is believed to be plastoquinone. Couples the redox reaction to proton translocation, and thus conserves the redox energy in a proton gradient. The protein is NAD(P)H-quinone oxidoreductase subunit I, chloroplastic of Melampodium leucanthum (Black foot daisy).